We begin with the raw amino-acid sequence, 547 residues long: Chaperonin GroEL (547 aa).

ATP contacts are provided by residues 30–33 (TLGP), K51, 87–91 (DGTTT), G415, 479–481 (NAA), and D495.

This sequence belongs to the chaperonin (HSP60) family. In terms of assembly, forms a cylinder of 14 subunits composed of two heptameric rings stacked back-to-back. Interacts with the co-chaperonin GroES.

It localises to the cytoplasm. It catalyses the reaction ATP + H2O + a folded polypeptide = ADP + phosphate + an unfolded polypeptide.. Functionally, together with its co-chaperonin GroES, plays an essential role in assisting protein folding. The GroEL-GroES system forms a nano-cage that allows encapsulation of the non-native substrate proteins and provides a physical environment optimized to promote and accelerate protein folding. This Pseudomonas aeruginosa (strain UCBPP-PA14) protein is Chaperonin GroEL.